The primary structure comprises 311 residues: Olfactory receptor 6B1 (311 aa).

The Extracellular segment spans residues 1–25 (MELENQTRVTKFILVGFPGSLSMRA). Asn5 carries an N-linked (GlcNAc...) asparagine glycan. Residues 26-46 (AMFLIFLVAYILTVAENVIII) form a helical membrane-spanning segment. The Cytoplasmic segment spans residues 47-54 (LLVLQNRP). A helical membrane pass occupies residues 55-75 (LHKPMYFFLANLSFLETWYIS). Over 76–99 (VTVPKLLFSFWSVNNSISFTLCMI) the chain is Extracellular. The cysteines at positions 97 and 189 are disulfide-linked. Residues 100–120 (QLYFFIALMCTECVLLAAMAY) form a helical membrane-spanning segment. At 121-139 (DRYVAICRPLHYPTIMSHG) the chain is on the cytoplasmic side. The helical transmembrane segment at 140–160 (LCFRLALGSWAIGFGISLAKI) threads the bilayer. Residues 161 to 196 (YFISCLSFCGPNVINHFFCDISPVLNLSCTDMSITE) lie on the Extracellular side of the membrane. A helical transmembrane segment spans residues 197–217 (LVDFILALVIFLFPLFITVLS). Topologically, residues 218-235 (YGCILATILCMPTGKQKA) are cytoplasmic. The chain crosses the membrane as a helical span at residues 236 to 256 (FSTCASHLVVVTIFYSAIIFM). At 257–269 (YARPRVIHAFNMN) the chain is on the extracellular side. Residues 270–290 (KIISIFYAIVTPSLNPFIYCL) traverse the membrane as a helical segment. The Cytoplasmic segment spans residues 291–311 (RNREVKEALKKLAYCQASRSD).

This sequence belongs to the G-protein coupled receptor 1 family.

It is found in the cell membrane. Functionally, odorant receptor. The protein is Olfactory receptor 6B1 (OR6B1) of Homo sapiens (Human).